Here is a 429-residue protein sequence, read N- to C-terminus: Gamma-glutamyl phosphate reductase (429 aa).

The protein belongs to the gamma-glutamyl phosphate reductase family.

Its subcellular location is the cytoplasm. It catalyses the reaction L-glutamate 5-semialdehyde + phosphate + NADP(+) = L-glutamyl 5-phosphate + NADPH + H(+). It participates in amino-acid biosynthesis; L-proline biosynthesis; L-glutamate 5-semialdehyde from L-glutamate: step 2/2. Its function is as follows. Catalyzes the NADPH-dependent reduction of L-glutamate 5-phosphate into L-glutamate 5-semialdehyde and phosphate. The product spontaneously undergoes cyclization to form 1-pyrroline-5-carboxylate. This chain is Gamma-glutamyl phosphate reductase, found in Methylocella silvestris (strain DSM 15510 / CIP 108128 / LMG 27833 / NCIMB 13906 / BL2).